The following is a 204-amino-acid chain: Ribonuclease HII (204 aa).

One can recognise an RNase H type-2 domain in the interval 1–197; that stretch reads MILGIDEAGR…KNRILNPKLL (197 aa). A divalent metal cation contacts are provided by aspartate 6, glutamate 7, and aspartate 103.

It belongs to the RNase HII family. Mn(2+) is required as a cofactor. It depends on Mg(2+) as a cofactor.

The protein localises to the cytoplasm. The catalysed reaction is Endonucleolytic cleavage to 5'-phosphomonoester.. Endonuclease that specifically degrades the RNA of RNA-DNA hybrids. The polypeptide is Ribonuclease HII (Helicobacter pylori (strain Shi470)).